A 606-amino-acid polypeptide reads, in one-letter code: Glucose methanol choline oxidoreductase atC (606 aa).

Residues 1–19 form the signal peptide; sequence MRVFPTYIAVSGLFGGAFA. N-linked (GlcNAc...) asparagine glycosylation is found at Asn-43, Asn-69, Asn-87, Asn-290, Asn-368, Asn-418, Asn-421, and Asn-552.

Belongs to the GMC oxidoreductase family.

The enzyme catalyses terremutin + A = terreate + AH2. Its pathway is secondary metabolite biosynthesis. Functionally, glucose methanol choline oxidoreductase; part of the gene cluster that mediates the biosynthesis of terreic acid, a quinone epoxide inhibitor of Bruton's tyrosine kinase. The first step of the pathway is the synthesis of 6-methylsalicylic acid (6-MSA) by the 6-methylsalicylic acid synthase atX. In the biosynthesis of 6-MSA, atX utilizes one acetyl-CoA and three malonyl-CoAs as its substrates and catalyzes a series of programmed reactions including Claisen condensation, reduction, aldol cyclization, and the hydrolytic cleavage that yields 6-MSA. The 6-methylsalicylate 1-monooxygenase atA then catalyzes the decarboxylative hydroxylation of 6-MSA to 3-methylcatechol. The next step is the conversion of 3-methylcatechol to 3-methyl-1,2,4-benzenetriol by cytochrome P450 monooxygenase atE, which is enhanced by cytochrome P450 monooxygenase atG. Then, the epoxidase atD catalyzes the epoxidation and hydroxyl oxidation of 3-methyl-1,2,4-benzenetriol to terremutin. Lastly, GMC oxidoreductase atC oxidizes terremutin to terreic acid. The chain is Glucose methanol choline oxidoreductase atC from Aspergillus terreus (strain NIH 2624 / FGSC A1156).